The primary structure comprises 134 residues: Large ribosomal subunit protein uL16c (134 aa).

The protein belongs to the universal ribosomal protein uL16 family. Part of the 50S ribosomal subunit.

Its subcellular location is the plastid. The protein resides in the chloroplast. The protein is Large ribosomal subunit protein uL16c of Oltmannsiellopsis viridis (Marine flagellate).